The following is a 63-amino-acid chain: uncharacterized protein (63 aa).

Residues 3–23 (IIYIILGFLSLAIGIIGIFPS) form a helical membrane-spanning segment.

It is found in the membrane. This is an uncharacterized protein from Haemophilus influenzae (strain ATCC 51907 / DSM 11121 / KW20 / Rd).